We begin with the raw amino-acid sequence, 606 residues long: WD repeat-containing protein 1 (606 aa).

WD repeat units follow at residues 4-45, 48-87, 93-135, 138-176, 180-218, 224-263, 270-306, 311-351, 358-408, 432-474, 480-518, 523-561, and 566-604; these read EIKK…LRNI, PAIADIYTEHAHQVVVAKYAPSGFYIASGDVSGKLRIWDT, LLKY…LWDS, SVGEITGHNKVINSVDIKQSRPYRLVTGSDDNCAAFFEG, KFKFTISDHGRFVNCVRFSPDGNRFATASADGQIFIYDG, VCALGGSKAHDGGIYAISWSPDSTHLLSASGDKTSKIWDV, NTFTMGSNVLDQQLGCLWQKDHLLSISLSGYINYLDK, KPLR…YWDS, SFAG…KLDV, LKDQ…LYSI, KDEGKLLEAKGPVTDLAFSHDGAFLAVCDASKVVTVFSV, SENNVFYGHHAKIVCLAWSPDNEHFASGGMDMMVYVWTL, and TRVKIQDAHRLHHVSSLAWLDEHTLVTTSHDASVKEWTI. Lys28, Lys81, Lys95, and Lys115 each carry N6-acetyllysine. At Tyr238 the chain carries Phosphotyrosine. The residue at position 480 (Lys480) is an N6-acetyllysine.

Belongs to the WD repeat AIP1 family.

The protein localises to the cytoplasm. The protein resides in the cytoskeleton. It localises to the cell projection. It is found in the podosome. Functionally, induces disassembly of actin filaments in conjunction with ADF/cofilin family proteins. Enhances cofilin-mediated actin severing. Involved in cytokinesis. Involved in chemotactic cell migration by restricting lamellipodial membrane protrusions. Involved in myocardium sarcomere organization. Required for cardiomyocyte growth and maintenance. Involved in megakaryocyte maturation and platelet shedding. Required for the establishment of planar cell polarity (PCP) during follicular epithelium development and for cell shape changes during PCP; the function seems to implicate cooperation with CFL1 and/or DSTN/ADF. Involved in the generation/maintenance of cortical tension. Involved in assembly and maintenance of epithelial apical cell junctions and plays a role in the organization of the perijunctional actomyosin belt. This is WD repeat-containing protein 1 (WDR1) from Bos taurus (Bovine).